We begin with the raw amino-acid sequence, 454 residues long: Cerebellar degeneration-related protein 2 (454 aa).

Coiled coils occupy residues 44–142 and 192–265; these read ELED…SGQG and EEEN…QSEH. The tract at residues 134 to 153 is disordered; the sequence is EELKSSGQGRRSPGKCDQEK. The residue at position 311 (Ser311) is a Phosphoserine. A coiled-coil region spans residues 346 to 380; the sequence is LHEVDTQYSALKVKYEELLKKCQEEQDSLSHKAVQ.

The protein belongs to the CDR2 family.

This Homo sapiens (Human) protein is Cerebellar degeneration-related protein 2 (CDR2).